The following is a 752-amino-acid chain: DNA ligase (752 aa).

NAD(+) contacts are provided by residues Asp-48–Asp-52, Ser-97–Leu-98, and Glu-131. Catalysis depends on Lys-133, which acts as the N6-AMP-lysine intermediate. The NAD(+) site is built by Arg-154, Glu-189, Lys-305, and Lys-329. Zn(2+) is bound by residues Cys-434, Cys-437, Cys-452, and Cys-458. Basic and acidic residues predominate over residues Ala-599–Trp-615. The tract at residues Ala-599–Thr-618 is disordered. A BRCT domain is found at Ala-673–Ala-752.

This sequence belongs to the NAD-dependent DNA ligase family. LigA subfamily. Mg(2+) serves as cofactor. Mn(2+) is required as a cofactor.

It catalyses the reaction NAD(+) + (deoxyribonucleotide)n-3'-hydroxyl + 5'-phospho-(deoxyribonucleotide)m = (deoxyribonucleotide)n+m + AMP + beta-nicotinamide D-nucleotide.. Its function is as follows. DNA ligase that catalyzes the formation of phosphodiester linkages between 5'-phosphoryl and 3'-hydroxyl groups in double-stranded DNA using NAD as a coenzyme and as the energy source for the reaction. It is essential for DNA replication and repair of damaged DNA. The sequence is that of DNA ligase from Jannaschia sp. (strain CCS1).